Consider the following 400-residue polypeptide: UDP-glucuronate:glycolipid 2-beta-glucuronosyltransferase (400 aa).

Asp157 functions as the Proton acceptor in the catalytic mechanism. Residues 230–231, 272–273, Tyr292, and 306–310 each bind UDP-alpha-D-glucuronate; these read SM, EM, and MKLLQ. The interval 377 to 400 is disordered; the sequence is PETRLYPHPPTAAPQLSSEAALSH. Residues 390 to 400 show a composition bias toward polar residues; it reads PQLSSEAALSH.

It belongs to the glycosyltransferase 70 family.

The protein localises to the cell inner membrane. It catalyses the reaction alpha-D-Man-(1-&gt;3)-beta-D-Glc-(1-&gt;4)-alpha-D-Glc-1-di-trans,octa-cis-undecaprenyl diphosphate + UDP-alpha-D-glucuronate = beta-D-GlcA-(1-&gt;2)-alpha-D-Man-(1-&gt;3)-beta-D-Glc-(1-&gt;4)-alpha-D-Glc-di-trans,octa-cis-undecaprenyl diphosphate + UDP + H(+). The protein operates within glycan biosynthesis; xanthan biosynthesis. In terms of biological role, catalyzes the transfer of a glucuronic acid (GlcA) residue from UDP-glucuronate to mannose-alpha-1,3-glucose-beta-1,4-glucose-P-P-polyisoprenyl to form the lipid-linked tetrasaccharide GlcA-Man-Glc(2)-PP-Pol, with a glucuronic acid-beta-mannose linkage. Is involved in the biosynthesis of the exopolysaccharide xanthan, since it catalyzes the fourth glycosylation step in the assembly of the pentasaccharide-P-P-polyisoprenyl repeating unit of xanthan. Is unable to use the trisaccharide acceptor freed from the pyrophosphate lipid moiety. Does not show specificity for the lipidic portion of the acceptor. Shows diminished activity when tested with 6-O-acetyl-mannose-alpha-1,3-glucose-beta-1,4-glucose-P-P-polyisoprenyl, a putative intermediate in the synthesis of xanthan; this could indicate that acetylation of the internal mannose takes place after the formation of the GumK product. The sequence is that of UDP-glucuronate:glycolipid 2-beta-glucuronosyltransferase (gumK) from Xanthomonas campestris pv. campestris.